The sequence spans 347 residues: O-methyltransferase aunE (347 aa).

W166 lines the S-adenosyl-L-methionine pocket. H265 serves as the catalytic Proton acceptor.

Belongs to the class I-like SAM-binding methyltransferase superfamily. Cation-independent O-methyltransferase family.

It participates in secondary metabolite biosynthesis. Its function is as follows. O-methyltransferase; part of the gene cluster that mediates the biosynthesis of aurasperone B, a dimeric gamma-naphthopyrone. The first step in the biosynthesis of aurasperone B is the production of gamma-naphthopyrone precursor YWA1 by the non-reducing polyketide synthase albA, via condensation of one acetyl-CoA starter unit with 6 malonyl-CoA units. YWA1 is then methylated by aunE at position C-6 to yield foncesin which is further methylated at position C-8 by aunD to produce fonsecin B. A key enzyme in the biosynthetic pathway is the cytochrome P450 monooxygenase aunB which catalyzes the oxidative dimerization of fonsecin B to aurasperone B. AunB also catalyzes the oxidative dimerization of rubrofusarin B into aurasperone A. This Aspergillus niger (strain ATCC 1015 / CBS 113.46 / FGSC A1144 / LSHB Ac4 / NCTC 3858a / NRRL 328 / USDA 3528.7) protein is O-methyltransferase aunE.